Reading from the N-terminus, the 200-residue chain is Small ribosomal subunit protein uS4 (200 aa).

The 64-residue stretch at 92–155 (SRLDAVVYSL…QKLNVIVESV (64 aa)) folds into the S4 RNA-binding domain.

It belongs to the universal ribosomal protein uS4 family. In terms of assembly, part of the 30S ribosomal subunit. Contacts protein S5. The interaction surface between S4 and S5 is involved in control of translational fidelity.

Its function is as follows. One of the primary rRNA binding proteins, it binds directly to 16S rRNA where it nucleates assembly of the body of the 30S subunit. Functionally, with S5 and S12 plays an important role in translational accuracy. This is Small ribosomal subunit protein uS4 from Staphylococcus aureus (strain MRSA252).